The sequence spans 567 residues: Urease subunit alpha (567 aa).

The region spanning 130-567 is the Urease domain; sequence GGIDTHIHFI…LPLAQRYFLF (438 aa). The Ni(2+) site is built by His135, His137, and Lys218. Lys218 is subject to N6-carboxylysine. His220 contacts substrate. Residues His247 and His273 each contribute to the Ni(2+) site. His321 functions as the Proton donor in the catalytic mechanism. Asp361 contacts Ni(2+).

It belongs to the metallo-dependent hydrolases superfamily. Urease alpha subunit family. Heterotrimer of UreA (gamma), UreB (beta) and UreC (alpha) subunits. Three heterotrimers associate to form the active enzyme. The cofactor is Ni cation. Carboxylation allows a single lysine to coordinate two nickel ions.

Its subcellular location is the cytoplasm. It catalyses the reaction urea + 2 H2O + H(+) = hydrogencarbonate + 2 NH4(+). It functions in the pathway nitrogen metabolism; urea degradation; CO(2) and NH(3) from urea (urease route): step 1/1. This is Urease subunit alpha from Methylobacillus flagellatus (strain ATCC 51484 / DSM 6875 / VKM B-1610 / KT).